The sequence spans 426 residues: Zinc finger CCCH domain-containing protein 15 (426 aa).

The segment covering 1-12 (MPPKKQAQAGGS) has biased composition (low complexity). Disordered regions lie at residues 1–30 (MPPKKQAQAGGSKKAEQKKKEKIIEDKTFG) and 53–74 (GQQNPRQVAQSEAEKKLKKDDK). The span at 13–29 (KKAEQKKKEKIIEDKTF) shows a compositional bias: basic and acidic residues. Polar residues predominate over residues 53 to 62 (GQQNPRQVAQ). The stretch at 61 to 86 (AQSEAEKKLKKDDKKKELQELNELFK) forms a coiled coil. Positions 64-74 (EAEKKLKKDDK) are enriched in basic and acidic residues. 2 consecutive C3H1-type zinc fingers follow at residues 99–126 (DPKSVVCAFFKQGQCTKGDKCKFSHDLT) and 174–212 (PKTQIVCKHFLEAIENNKYGWFWVCPGGGDICMYRHALP). Residues 218-285 (KKDKKKEEKE…RRKADFKAGK (68 aa)) adopt a coiled-coil conformation. Serine 231 carries the post-translational modification Phosphoserine. Positions 236 to 260 (IERERSALGPNVTKITLESFLAWKK) are required for interaction with DRG1. The tract at residues 299–326 (PELVNDDDEEADDTRYTQGTGGDEVDDS) is disordered. A phosphoserine mark is found at serine 351, serine 360, and serine 381. Residues 358–411 (YTSDKDENKLSEASGGRAENGERSDLEEDNEREGTENGAIDAVPVDENLFTGED) form a disordered region.

This sequence belongs to the ZC3H15/TMA46 family. Interacts with DRG1; this interaction prevents DRG1 poly-ubiquitination and degradation by proteasome. DRG1-ZC3H15/DFRP1 complex co-sediments with polysomes. Associates with microtubules.

The protein resides in the cytoplasm. The protein localises to the nucleus. Functionally, protects DRG1 from proteolytic degradation. Stimulates DRG1 GTPase activity likely by increasing the affinity for the potassium ions. This is Zinc finger CCCH domain-containing protein 15 (ZC3H15) from Homo sapiens (Human).